We begin with the raw amino-acid sequence, 465 residues long: VGFKAGVKDYKLTYYTPEYETKDTDILAAFRVTPQPGVPPEEAGAAVAAESSTGTWTTVWTDGLTSLDRYKGRCYHIEPVAGEESQXIAYVAYPLDLFEEGSVTNMFTSIVGNVFGFKALRALRLEDLRIPPAYSKTFQGPPHGIQVERDKLNKYGRPLLGCTIKPKLGLSAKNYGRAVYECLRGGLDFTKDDENVNSQPFMRWRDRFLFCAEAIYKAQAETGEIKGHYLNATAGTCEEMIKRAVFARELGVPIVMHDYLTGGFTANTTLAHYCRDNGLLLHIHRAMHAVIDRQKNHGMHFRVLAKALRMSGGDHIHAGTVVGKLEGEREITLGFVDLLRDDFIEKDRSRGIYFTQDWVSLPGVLPVASGGIHVWHMPALTEIFGDDSVLQFGGGTLGHPWGNAPGAVANRVALEACVQARNEGRDLAREGNEIIREASKWSPELAAACEVWKEIKFEFEAMDTL.

Position 4 is an N6,N6,N6-trimethyllysine (Lys4). The substrate site is built by Asn113 and Thr163. Lys165 acts as the Proton acceptor in catalysis. Lys167 is a binding site for substrate. Mg(2+) is bound by residues Lys191, Asp193, and Glu194. At Lys191 the chain carries N6-carboxylysine. His284 (proton acceptor) is an active-site residue. Positions 285, 317, and 369 each coordinate substrate.

Belongs to the RuBisCO large chain family. Type I subfamily. In terms of assembly, heterohexadecamer of 8 large chains and 8 small chains; disulfide-linked. The disulfide link is formed within the large subunit homodimers. Mg(2+) serves as cofactor. Post-translationally, the disulfide bond which can form in the large chain dimeric partners within the hexadecamer appears to be associated with oxidative stress and protein turnover.

It is found in the plastid. It localises to the chloroplast. It catalyses the reaction 2 (2R)-3-phosphoglycerate + 2 H(+) = D-ribulose 1,5-bisphosphate + CO2 + H2O. The enzyme catalyses D-ribulose 1,5-bisphosphate + O2 = 2-phosphoglycolate + (2R)-3-phosphoglycerate + 2 H(+). RuBisCO catalyzes two reactions: the carboxylation of D-ribulose 1,5-bisphosphate, the primary event in carbon dioxide fixation, as well as the oxidative fragmentation of the pentose substrate in the photorespiration process. Both reactions occur simultaneously and in competition at the same active site. The chain is Ribulose bisphosphate carboxylase large chain from Hamamelis mollis (Chinese witch hazel).